A 339-amino-acid polypeptide reads, in one-letter code: Dihydroorotase (339 aa).

Residues histidine 12 and histidine 14 each contribute to the Zn(2+) site. Substrate-binding positions include 14 to 16 (HVR) and asparagine 40. Residues lysine 94, histidine 133, histidine 167, and aspartate 239 each contribute to the Zn(2+) site. Lysine 94 is modified (N6-carboxylysine). Residue histidine 133 participates in substrate binding. Aspartate 239 is an active-site residue. Positions 243 and 255 each coordinate substrate.

Belongs to the metallo-dependent hydrolases superfamily. DHOase family. Class II DHOase subfamily. Homodimer. Requires Zn(2+) as cofactor.

It catalyses the reaction (S)-dihydroorotate + H2O = N-carbamoyl-L-aspartate + H(+). It functions in the pathway pyrimidine metabolism; UMP biosynthesis via de novo pathway; (S)-dihydroorotate from bicarbonate: step 3/3. Catalyzes the reversible cyclization of carbamoyl aspartate to dihydroorotate. This is Dihydroorotase from Helicobacter pylori (strain ATCC 700392 / 26695) (Campylobacter pylori).